Here is a 466-residue protein sequence, read N- to C-terminus: Muscarinic acetylcholine receptor M2 (466 aa).

Residues 1-22 (MNNSTNSSNNSLALTSPYKTFE) lie on the Extracellular side of the membrane. Residues asparagine 2, asparagine 3, asparagine 6, and asparagine 9 are each glycosylated (N-linked (GlcNAc...) asparagine). Residues 23 to 45 (VVFIVLVAGSLSLVTIIGNILVM) traverse the membrane as a helical segment. Residues 46–59 (VSIKVNRHLQTVNN) lie on the Cytoplasmic side of the membrane. Residues 60 to 80 (YFLFSLACADLIIGVFSMNLY) form a helical membrane-spanning segment. Over 81-97 (TLYTVIGYWPLGPVVCD) the chain is Extracellular. Cysteine 96 and cysteine 176 form a disulfide bridge. A helical membrane pass occupies residues 98-119 (LWLALDYVVSNASVMNLLIISF). The short motif at 120–122 (DRY) is the Important for signaling element. Residues 120–139 (DRYFCVTKPLTYPVKRTTKM) are Cytoplasmic-facing. Residues 140 to 162 (AGMMIAAAWVLSFILWAPAILFW) traverse the membrane as a helical segment. At 163–184 (QFIVGVRTVEDGECYIQFFSNA) the chain is on the extracellular side. Residues 185–209 (AVTFGTAIAAFYLPVIIMTVLYWHI) traverse the membrane as a helical segment. The Cytoplasmic portion of the chain corresponds to 210-387 (SRASKSRIKK…PPSREKKVTR (178 aa)). Residues 218 to 355 (KKDKKEPVAN…VVGSSGQNGD (138 aa)) are disordered. The residue at position 232 (serine 232) is a Phosphoserine. Over residues 254-270 (GLEHNKIQNGKAPRDPV) the composition is skewed to basic and acidic residues. 3 stretches are compositionally biased toward polar residues: residues 284 to 293 (NDSTSVSAVA), 304 to 313 (DENTVSTSLG), and 334 to 353 (SDSC…SGQN). The chain crosses the membrane as a helical span at residues 388-410 (TILAILLAFIITWAPYNVMVLIN). The Extracellular segment spans residues 411–418 (TFCAPCIP). The cysteines at positions 413 and 416 are disulfide-linked. Residues 419 to 442 (NTVWTIGYWLCYINSTINPACYAL) traverse the membrane as a helical segment. Residues 436 to 440 (NPACY) carry the Important for signaling motif. The Cytoplasmic segment spans residues 443–466 (CNATFKKTFKHLLMCHYKNIGATR). Threonine 446, threonine 450, and threonine 465 each carry phosphothreonine.

This sequence belongs to the G-protein coupled receptor 1 family. Muscarinic acetylcholine receptor subfamily. CHRM2 sub-subfamily. In terms of assembly, interacts with ARRB1 and ARRB2. Interacts with RACK1; the interaction regulates CHRM2 internalization. In terms of processing, phosphorylated in response to agonist treatment.

The protein resides in the cell membrane. It is found in the postsynaptic cell membrane. Its function is as follows. The muscarinic acetylcholine receptor mediates various cellular responses, including inhibition of adenylate cyclase, breakdown of phosphoinositides and modulation of potassium channels through the action of G proteins. Primary transducing effect is adenylate cyclase inhibition. Signaling promotes phospholipase C activity, leading to the release of inositol trisphosphate (IP3); this then triggers calcium ion release into the cytosol. This Homo sapiens (Human) protein is Muscarinic acetylcholine receptor M2 (CHRM2).